We begin with the raw amino-acid sequence, 558 residues long: Formate--tetrahydrofolate ligase (558 aa).

66 to 73 (TPAGEGKT) is an ATP binding site.

It belongs to the formate--tetrahydrofolate ligase family.

The enzyme catalyses (6S)-5,6,7,8-tetrahydrofolate + formate + ATP = (6R)-10-formyltetrahydrofolate + ADP + phosphate. Its pathway is one-carbon metabolism; tetrahydrofolate interconversion. The sequence is that of Formate--tetrahydrofolate ligase from Clostridium kluyveri (strain NBRC 12016).